The chain runs to 422 residues: UPF0761 membrane protein Paes_1471 (422 aa).

6 consecutive transmembrane segments (helical) span residues 47–67 (LLSI…SPVF), 103–123 (SVPT…ISTI), 143–163 (FTLY…SLVA), 185–205 (LLLL…ILVP), 208–228 (KVKF…FEFS), and 247–267 (GALS…VVAL).

It belongs to the UPF0761 family.

It localises to the cell inner membrane. This is UPF0761 membrane protein Paes_1471 from Prosthecochloris aestuarii (strain DSM 271 / SK 413).